Here is a 344-residue protein sequence, read N- to C-terminus: Interactor of constitutive active ROPs 1 (344 aa).

4 disordered regions span residues 1 to 74, 92 to 139, 186 to 218, and 307 to 344; these read MPRP…ESQL, EAVK…KETD, HESLGKENESLKNQLSDSASEISNVKANEDEMV, and FMDPPGMADDYDDGLGSGKRKSSGMKMFGELWRKKGQK. Residues 19–29 are compositionally biased toward low complexity; the sequence is SSSSTSDSNHS. Residues 60–108 adopt a coiled-coil conformation; the sequence is QKKLGGRISDLESQLGQAQEELRLLKEQLANAEAVKKQAQDELHKKSKK. 3 stretches are compositionally biased toward basic and acidic residues: residues 93-103, 114-139, and 186-195; these read AVKKQAQDELH, RVEESATEAERIDRDEIPGDVQKETD, and HESLGKENES. The stretch at 145–273 forms a coiled coil; sequence VEKIAVEEEE…EQWRKAADAA (129 aa). Over residues 196 to 211 the composition is skewed to polar residues; sequence LKNQLSDSASEISNVK.

It belongs to the ICR family. As to quaternary structure, homooligomer. Interacts with ARAC3, ARAC4, ARAC8, ARAC11 and SEC3A, but not with ICR2 or EXO70A1. As to expression, expressed in mature and germinating pollen. Expressed throughout the embryo but not in the hypophysis and quiescent center (QC). In roots, absent from the QC and the stem cells.

The protein localises to the cell membrane. It localises to the nucleus. Acts as a scaffold, mediating interaction of ROPs with different proteins. Required for primary and adventitious root maintenance, but not for their formation. Promotes the stabilization of ARAC11 on the plasma membrane of the pollen tube initiation site but not the activation of ARAC11. Regulates directionality of polar auxin transport, and is required for the formation of a stable auxin maximum and tip localized auxin gradient during embryogenesis, organogenesis, and meristem activity. Involved in exocytosis and in the recycling of PIN proteins back to the plasma membrane. This is Interactor of constitutive active ROPs 1 (ICR1) from Arabidopsis thaliana (Mouse-ear cress).